A 677-amino-acid polypeptide reads, in one-letter code: uncharacterized protein (677 aa).

A run of 3 helical transmembrane segments spans residues 80–102, 338–360, and 367–386; these read ILSLFATLVLMVGVFFCAPRASF, ALLSNASGAFVIAQAVPVLLFGF, and LVAMVAVVTTFLLVFQLLSL. Residues 523 to 556 form a disordered region; sequence DEAASLPSDSSPEEDLDPLEEVESIEGTAEESTR. Residues 533–546 are compositionally biased toward acidic residues; sequence SPEEDLDPLEEVES.

It localises to the cell membrane. This is an uncharacterized protein from Treponema pallidum (strain Nichols).